The primary structure comprises 308 residues: Porphobilinogen deaminase (308 aa).

Cysteine 241 bears the S-(dipyrrolylmethanemethyl)cysteine mark.

The protein belongs to the HMBS family. In terms of assembly, monomer. It depends on dipyrromethane as a cofactor.

The catalysed reaction is 4 porphobilinogen + H2O = hydroxymethylbilane + 4 NH4(+). The protein operates within porphyrin-containing compound metabolism; protoporphyrin-IX biosynthesis; coproporphyrinogen-III from 5-aminolevulinate: step 2/4. In terms of biological role, tetrapolymerization of the monopyrrole PBG into the hydroxymethylbilane pre-uroporphyrinogen in several discrete steps. In Exiguobacterium sibiricum (strain DSM 17290 / CCUG 55495 / CIP 109462 / JCM 13490 / 255-15), this protein is Porphobilinogen deaminase.